The sequence spans 201 residues: Anthranilate synthase component 2 (201 aa).

The 194-residue stretch at 3 to 196 (NILFIDNFDS…IDWALSSTPA (194 aa)) folds into the Glutamine amidotransferase type-1 domain. 57–59 (GPG) provides a ligand contact to L-glutamine. Cys-84 (nucleophile; for GATase activity) is an active-site residue. L-glutamine is bound by residues Gln-88 and 134-135 (SL). Active-site for GATase activity residues include His-170 and Glu-172.

In terms of assembly, heterotetramer consisting of two non-identical subunits: a beta subunit (TrpG) and a large alpha subunit (TrpE).

The enzyme catalyses chorismate + L-glutamine = anthranilate + pyruvate + L-glutamate + H(+). The protein operates within amino-acid biosynthesis; L-tryptophan biosynthesis; L-tryptophan from chorismate: step 1/5. Functionally, part of a heterotetrameric complex that catalyzes the two-step biosynthesis of anthranilate, an intermediate in the biosynthesis of L-tryptophan. In the first step, the glutamine-binding beta subunit (TrpG) of anthranilate synthase (AS) provides the glutamine amidotransferase activity which generates ammonia as a substrate that, along with chorismate, is used in the second step, catalyzed by the large alpha subunit of AS (TrpE) to produce anthranilate. In the absence of TrpG, TrpE can synthesize anthranilate directly from chorismate and high concentrations of ammonia. This chain is Anthranilate synthase component 2 (trpG), found in Vibrio cholerae serotype O1 (strain ATCC 39315 / El Tor Inaba N16961).